We begin with the raw amino-acid sequence, 95 residues long: UPF0473 protein BPUM_2377 (95 aa).

It belongs to the UPF0473 family.

The protein is UPF0473 protein BPUM_2377 of Bacillus pumilus (strain SAFR-032).